The chain runs to 354 residues: MDRRDAMALSGSGSYYIQRGIPGSGPPPPQTQPTFHGSQGFHHFTNSISPFGSNPNPNPNPGGVSTGFVSPPLPVDSSPADSSAAAAGALVAPPSGDTSVKRKRGRPRKYGQDGGSVSLALSPSISNVSPNSNKRGRGRPPGSGKKQRLSSIGEMMPSSTGMSFTPHVIVVSIGEDIASKVISFSHQGPRAICVLSASGAVSTATLLQPAPSHGTIIYEGLFELISLSTSYLNTTDNDYPNRTGSLAVSLASPDGRVIGGGIGGPLIAASQVQVIVGSFIWAIPKGKIKKREETSEDVQDTDALENNNDNTAATSPPVPQQSQNIVQTPVGIWSTGSRSMDMHHPHMDIDLMRG.

Disordered regions lie at residues 1–158 and 290–354; these read MDRR…MMPS and KREE…LMRG. Composition is skewed to low complexity over residues 46-55 and 75-96; these read NSISPFGSNP and VDSSPADSSAAAAGALVAPPSG. The Bipartite nuclear localization signal motif lies at 101-109; sequence KRKRGRPRK. The segment at residues 101–113 is a DNA-binding region (a.T hook 1); sequence KRKRGRPRKYGQD. Positions 122-133 are enriched in low complexity; sequence SPSISNVSPNSN. Positions 134-146 form a DNA-binding region, a.T hook 2; that stretch reads KRGRGRPPGSGKK. Residues 159–302 form the PPC domain; sequence STGMSFTPHV…ETSEDVQDTD (144 aa). The span at 294-303 shows a compositional bias: acidic residues; sequence TSEDVQDTDA. Positions 304–327 are enriched in polar residues; sequence LENNNDNTAATSPPVPQQSQNIVQ. Positions 340–354 are enriched in basic and acidic residues; that stretch reads MDMHHPHMDIDLMRG.

The protein resides in the nucleus. Its function is as follows. Transcription factor that specifically binds AT-rich DNA sequences related to the nuclear matrix attachment regions (MARs). The chain is AT-hook motif nuclear-localized protein 11 from Arabidopsis thaliana (Mouse-ear cress).